A 222-amino-acid chain; its full sequence is Large ribosomal subunit protein mL64 (222 aa).

Disordered regions lie at residues 21–47 and 186–222; these read RSRS…NLLT and QRKR…EPSS. A coiled-coil region spans residues 98–207; it reads TMQESLRLQQ…KKEARIAAMA (110 aa). The short motif at 184-200 is the Nuclear localization signal element; that stretch reads KQQRKRLKEERQRQKKE. Basic and acidic residues predominate over residues 186–202; sequence QRKRLKEERQRQKKEAR. Residues 203 to 215 are compositionally biased toward low complexity; sequence IAAMASAEAQDSA.

This sequence belongs to the mitochondrion-specific ribosomal protein mL64 family. As to quaternary structure, component of the mitochondrial ribosome large subunit (39S) which comprises a 16S rRNA and about 50 distinct proteins. Interacts with GADD45A, GADD45B and GADD45G. Interacts with NR4A1 via the NR4A1 AB domain. Interacts with ATAD3A and ATAD3B.

It localises to the mitochondrion. The protein resides in the nucleus. In terms of biological role, acts as a negative regulator of G1 to S cell cycle phase progression by inhibiting cyclin-dependent kinases. Inhibitory effects are additive with GADD45 proteins but also occur in the absence of GADD45 proteins. Acts as a repressor of the orphan nuclear receptor NR4A1 by inhibiting AB domain-mediated transcriptional activity. May be involved in the hormone-mediated regulation of NR4A1 transcriptional activity. May play a role in mitochondrial protein synthesis. The sequence is that of Large ribosomal subunit protein mL64 (Gadd45gip1) from Mus musculus (Mouse).